Here is a 326-residue protein sequence, read N- to C-terminus: Tetraacyldisaccharide 4'-kinase (326 aa).

55–62 serves as a coordination point for ATP; the sequence is TVGGNGKT.

Belongs to the LpxK family.

The catalysed reaction is a lipid A disaccharide + ATP = a lipid IVA + ADP + H(+). Its pathway is glycolipid biosynthesis; lipid IV(A) biosynthesis; lipid IV(A) from (3R)-3-hydroxytetradecanoyl-[acyl-carrier-protein] and UDP-N-acetyl-alpha-D-glucosamine: step 6/6. Functionally, transfers the gamma-phosphate of ATP to the 4'-position of a tetraacyldisaccharide 1-phosphate intermediate (termed DS-1-P) to form tetraacyldisaccharide 1,4'-bis-phosphate (lipid IVA). The sequence is that of Tetraacyldisaccharide 4'-kinase from Tolumonas auensis (strain DSM 9187 / NBRC 110442 / TA 4).